The following is a 315-amino-acid chain: Putative methyltransferase NSUN5C (315 aa).

Residues 50 to 56 (VPPQAIK), aspartate 74, arginine 79, and aspartate 121 contribute to the S-adenosyl-L-methionine site. Residue cysteine 175 is the Nucleophile of the active site. The tract at residues 245–269 (TSASQAKASAPERTPSPAPKRKKRA) is disordered.

Belongs to the class I-like SAM-binding methyltransferase superfamily. RsmB/NOP family. As to expression, ubiquitous.

Its function is as follows. May have S-adenosyl-L-methionine-dependent methyl-transferase activity. This Homo sapiens (Human) protein is Putative methyltransferase NSUN5C (NSUN5P2).